Consider the following 318-residue polypeptide: Transaldolase (318 aa).

The Schiff-base intermediate with substrate role is filled by K132.

Belongs to the transaldolase family. Type 1 subfamily. Homodimer.

Its subcellular location is the cytoplasm. It catalyses the reaction D-sedoheptulose 7-phosphate + D-glyceraldehyde 3-phosphate = D-erythrose 4-phosphate + beta-D-fructose 6-phosphate. It functions in the pathway carbohydrate degradation; pentose phosphate pathway; D-glyceraldehyde 3-phosphate and beta-D-fructose 6-phosphate from D-ribose 5-phosphate and D-xylulose 5-phosphate (non-oxidative stage): step 2/3. Functionally, transaldolase is important for the balance of metabolites in the pentose-phosphate pathway. In Shewanella sp. (strain MR-7), this protein is Transaldolase.